The following is a 261-amino-acid chain: Cytosolic Fe-S cluster assembly factor Nubp2 homolog (261 aa).

14-21 (GKGGVGKS) is a binding site for ATP. Positions 188 and 191 each coordinate [4Fe-4S] cluster.

This sequence belongs to the Mrp/NBP35 ATP-binding proteins family. NUBP2/CFD1 subfamily. In terms of assembly, heterotetramer of 2 Nubp1 and 2 Nubp2 chains. [4Fe-4S] cluster is required as a cofactor.

It is found in the cytoplasm. Component of the cytosolic iron-sulfur (Fe/S) protein assembly (CIA) machinery. Required for maturation of extramitochondrial Fe-S proteins. The Nubp1-Nubp2 heterotetramer forms a Fe-S scaffold complex, mediating the de novo assembly of an Fe-S cluster and its transfer to target apoproteins. This chain is Cytosolic Fe-S cluster assembly factor Nubp2 homolog, found in Drosophila willistoni (Fruit fly).